The primary structure comprises 322 residues: Sideroflexin fsf1 (322 aa).

4 consecutive transmembrane segments (helical) span residues 143 to 163 (SYIY…KIVP), 175 to 195 (VLGR…NVFL), 229 to 249 (TALS…LVLM), and 269 to 289 (LGLI…VFPA).

The protein belongs to the sideroflexin family.

It localises to the mitochondrion membrane. Its function is as follows. Mitochondrial amino-acid transporter that mediates transport of serine into mitochondria. The sequence is that of Sideroflexin fsf1 from Schizosaccharomyces pombe (strain 972 / ATCC 24843) (Fission yeast).